Reading from the N-terminus, the 215-residue chain is LexA repressor (215 aa).

Positions 28-48 (RAEIAAELGFSSPNAAEEHLR) form a DNA-binding region, H-T-H motif. Residues serine 133 and lysine 170 each act as for autocatalytic cleavage activity in the active site.

Belongs to the peptidase S24 family. Homodimer.

It carries out the reaction Hydrolysis of Ala-|-Gly bond in repressor LexA.. Represses a number of genes involved in the response to DNA damage (SOS response), including recA and lexA. In the presence of single-stranded DNA, RecA interacts with LexA causing an autocatalytic cleavage which disrupts the DNA-binding part of LexA, leading to derepression of the SOS regulon and eventually DNA repair. The polypeptide is LexA repressor (Burkholderia cenocepacia (strain HI2424)).